Consider the following 650-residue polypeptide: tRNA-dihydrouridine(47) synthase [NAD(P)(+)]-like (650 aa).

2 disordered regions span residues 1–24 (MAEG…GALE) and 46–120 (EAKG…NYDK). Residue alanine 2 is modified to N-acetylalanine. 2 stretches are compositionally biased toward basic and acidic residues: residues 48–58 (KGQEKTCRETE) and 70–79 (PEAKRIRLED). Positions 101–113 (KRARGQNKGRPHV) are enriched in basic residues. C3H1-type zinc fingers lie at residues 118–148 (YDKN…HDVG) and 156–186 (ADLG…HLRP). The segment at 235–284 (FSQGPTPAAAVPEGTAAEGAPRQENCGAQQVPAGPGTSTPPSSPVRTCGP) is disordered. Residue serine 236 is modified to Phosphoserine. Threonine 273 bears the Phosphothreonine mark. 2 positions are modified to phosphoserine: serine 276 and serine 277. FMN contacts are provided by residues 311 to 313 (PLT) and glutamine 365. The active-site Proton donor is cysteine 396. Lysine 416 is covalently cross-linked (Glycyl lysine isopeptide (Lys-Gly) (interchain with G-Cter in SUMO2)). FMN is bound by residues lysine 435, histidine 465, 497–499 (NGD), and 520–521 (AR).

This sequence belongs to the Dus family. Dus3 subfamily. FMN is required as a cofactor.

The catalysed reaction is 5,6-dihydrouridine(47) in tRNA + NAD(+) = uridine(47) in tRNA + NADH + H(+). It catalyses the reaction 5,6-dihydrouridine(47) in tRNA + NADP(+) = uridine(47) in tRNA + NADPH + H(+). The enzyme catalyses a 5,6-dihydrouridine in mRNA + NAD(+) = a uridine in mRNA + NADH + H(+). It carries out the reaction a 5,6-dihydrouridine in mRNA + NADP(+) = a uridine in mRNA + NADPH + H(+). In terms of biological role, catalyzes the synthesis of dihydrouridine, a modified base, in various RNAs, such as tRNAs, mRNAs and some long non-coding RNAs (lncRNAs). Mainly modifies the uridine in position 47 (U47) in the D-loop of most cytoplasmic tRNAs. Also able to mediate the formation of dihydrouridine in some mRNAs, thereby regulating their translation. The polypeptide is tRNA-dihydrouridine(47) synthase [NAD(P)(+)]-like (Homo sapiens (Human)).